Consider the following 215-residue polypeptide: Pyrrolidone-carboxylate peptidase (215 aa).

Catalysis depends on residues E80, C143, and H167.

It belongs to the peptidase C15 family. In terms of assembly, homotetramer.

The protein resides in the cytoplasm. It carries out the reaction Release of an N-terminal pyroglutamyl group from a polypeptide, the second amino acid generally not being Pro.. In terms of biological role, removes 5-oxoproline from various penultimate amino acid residues except L-proline. This is Pyrrolidone-carboxylate peptidase from Bacillus thuringiensis (strain Al Hakam).